The sequence spans 448 residues: GA-binding protein subunit beta-2 (448 aa).

ANK repeat units lie at residues 5 to 34 (DLGKRLLEAARKGQDDEVRTLMANGAPFTT), 37 to 66 (LGTSPLHLAAQYGHYSTAEVLLRAGVSRDA), 70 to 99 (VDRTPLHMAAADGHAHIVELLVRNGADVNA), 103 to 132 (LKMTALHWATERHHRDVVELLIKYGADVHA), and 136 to 166 (FDKSAFDIALEKNNAEILVILQEAMQNQVNV). The residue at position 256 (serine 256) is a Phosphoserine. 2 disordered regions span residues 325 to 354 (EEEEKLPLTKKPRIGEKTNSVEESKEGNER) and 420 to 448 (ELEERETKVTGSAGTTEPHTRVSMATVSS). Basic and acidic residues predominate over residues 337–354 (RIGEKTNSVEESKEGNER). Positions 345-395 (VEESKEGNERELLQQQLQEANRRAQEYRHQLLKKEQEAEQYRLKLEAIARQ) form a coiled coil. Residues 428–448 (VTGSAGTTEPHTRVSMATVSS) show a composition bias toward polar residues.

Heterotetramer of two alpha and two beta subunits. The C-terminal is necessary for the formation of a heterotetrameric GABP-alpha-2/beta-2 complex, and also facilitates homotypic dimerization. Interacts with ADGRB2.

The protein localises to the nucleus. Its function is as follows. May function as transcription factor capable of interacting with purine rich repeats (GA repeats). This chain is GA-binding protein subunit beta-2 (GABPB2), found in Homo sapiens (Human).